A 272-amino-acid polypeptide reads, in one-letter code: Ethanolamine ammonia-lyase small subunit (272 aa).

Residues Val161, Glu182, and Cys211 each coordinate adenosylcob(III)alamin.

The protein belongs to the EutC family. In terms of assembly, the basic unit is a heterodimer which dimerizes to form tetramers. The heterotetramers trimerize; 6 large subunits form a core ring with 6 small subunits projecting outwards. The cofactor is adenosylcob(III)alamin.

The protein localises to the bacterial microcompartment. It carries out the reaction ethanolamine = acetaldehyde + NH4(+). It functions in the pathway amine and polyamine degradation; ethanolamine degradation. Its function is as follows. Catalyzes the deamination of various vicinal amino-alcohols to oxo compounds. Allows this organism to utilize ethanolamine as the sole source of nitrogen and carbon in the presence of external vitamin B12. The protein is Ethanolamine ammonia-lyase small subunit of Pseudomonas putida (strain GB-1).